We begin with the raw amino-acid sequence, 457 residues long: Bifunctional protein GlmU (457 aa).

The segment at 1-229 (MYNCAIILAA…YEEIMGVNSR (229 aa)) is pyrophosphorylase. UDP-N-acetyl-alpha-D-glucosamine is bound by residues 8-11 (LAAG), Lys22, Gln73, and 78-79 (GT). Asp103 is a binding site for Mg(2+). Residues Gly140, Glu155, Asn170, and Asn227 each contribute to the UDP-N-acetyl-alpha-D-glucosamine site. Asn227 provides a ligand contact to Mg(2+). A linker region spans residues 230–250 (VQLSEAEIVMRKRINHKHMVN). The N-acetyltransferase stretch occupies residues 251–457 (GVTFIDCEST…WLDKKGLLKK (207 aa)). Residues Arg332 and Lys350 each coordinate UDP-N-acetyl-alpha-D-glucosamine. The Proton acceptor role is filled by His362. UDP-N-acetyl-alpha-D-glucosamine is bound by residues Tyr365 and Asn376. Acetyl-CoA is bound by residues 385–386 (NY), Ala422, and Arg439.

It in the N-terminal section; belongs to the N-acetylglucosamine-1-phosphate uridyltransferase family. In the C-terminal section; belongs to the transferase hexapeptide repeat family. In terms of assembly, homotrimer. Requires Mg(2+) as cofactor.

The protein resides in the cytoplasm. The enzyme catalyses alpha-D-glucosamine 1-phosphate + acetyl-CoA = N-acetyl-alpha-D-glucosamine 1-phosphate + CoA + H(+). It carries out the reaction N-acetyl-alpha-D-glucosamine 1-phosphate + UTP + H(+) = UDP-N-acetyl-alpha-D-glucosamine + diphosphate. It functions in the pathway nucleotide-sugar biosynthesis; UDP-N-acetyl-alpha-D-glucosamine biosynthesis; N-acetyl-alpha-D-glucosamine 1-phosphate from alpha-D-glucosamine 6-phosphate (route II): step 2/2. It participates in nucleotide-sugar biosynthesis; UDP-N-acetyl-alpha-D-glucosamine biosynthesis; UDP-N-acetyl-alpha-D-glucosamine from N-acetyl-alpha-D-glucosamine 1-phosphate: step 1/1. The protein operates within bacterial outer membrane biogenesis; LPS lipid A biosynthesis. Catalyzes the last two sequential reactions in the de novo biosynthetic pathway for UDP-N-acetylglucosamine (UDP-GlcNAc). The C-terminal domain catalyzes the transfer of acetyl group from acetyl coenzyme A to glucosamine-1-phosphate (GlcN-1-P) to produce N-acetylglucosamine-1-phosphate (GlcNAc-1-P), which is converted into UDP-GlcNAc by the transfer of uridine 5-monophosphate (from uridine 5-triphosphate), a reaction catalyzed by the N-terminal domain. The chain is Bifunctional protein GlmU from Clostridium botulinum (strain Langeland / NCTC 10281 / Type F).